The chain runs to 1040 residues: V(D)J recombination-activating protein 1 (1040 aa).

A compositionally biased stretch (basic and acidic residues) spans 39–53 (EKAPEEAQKEKDSSE). The interval 39–71 (EKAPEEAQKEKDSSEGKPYLEQSPVVPEKPGGQ) is disordered. Lysine 233 is covalently cross-linked (Glycyl lysine isopeptide (Lys-Gly) (interchain with G-Cter in ubiquitin)). Zn(2+) contacts are provided by cysteine 266, histidine 270, cysteine 290, cysteine 293, histidine 295, cysteine 305, histidine 307, cysteine 310, cysteine 313, cysteine 325, cysteine 328, cysteine 355, cysteine 360, histidine 372, and histidine 376. The RING-type zinc-finger motif lies at 290 to 329 (CQICEHILADPVETSCKHLFCRICILRCLKVMGSYCPSCR). Residues 351–380 (LMVKCPAQDCNEEVSLEKYNHHVSSHKESK) form an RAG1-type zinc finger. Positions 389 to 456 (GGRPRQHLLS…QADELEAIMQ (68 aa)) form a DNA-binding region, NBD. A divalent metal cation is bound by residues aspartate 600, aspartate 708, and glutamate 962.

It belongs to the RAG1 family. As to quaternary structure, homodimer. Component of the RAG complex composed of core components RAG1 and RAG2, and associated component HMGB1 or HMGB2. Interacts with DCAF1, leading to recruitment of the CUL4A-RBX1-DDB1-DCAF1/VPRBP complex to ubiquitinate proteins and limit error-prone repair during V(D)J recombination. Mg(2+) is required as a cofactor. Requires Mn(2+) as cofactor. Autoubiquitinated in the presence of CDC34/UBCH3. In terms of tissue distribution, maturing lymphoid cells and central nervous system.

The protein localises to the nucleus. The catalysed reaction is S-ubiquitinyl-[E2 ubiquitin-conjugating enzyme]-L-cysteine + [acceptor protein]-L-lysine = [E2 ubiquitin-conjugating enzyme]-L-cysteine + N(6)-ubiquitinyl-[acceptor protein]-L-lysine.. Catalytic component of the RAG complex, a multiprotein complex that mediates the DNA cleavage phase during V(D)J recombination. V(D)J recombination assembles a diverse repertoire of immunoglobulin and T-cell receptor genes in developing B and T-lymphocytes through rearrangement of different V (variable), in some cases D (diversity), and J (joining) gene segments. In the RAG complex, RAG1 mediates the DNA-binding to the conserved recombination signal sequences (RSS) and catalyzes the DNA cleavage activities by introducing a double-strand break between the RSS and the adjacent coding segment. RAG2 is not a catalytic component but is required for all known catalytic activities. DNA cleavage occurs in 2 steps: a first nick is introduced in the top strand immediately upstream of the heptamer, generating a 3'-hydroxyl group that can attack the phosphodiester bond on the opposite strand in a direct transesterification reaction, thereby creating 4 DNA ends: 2 hairpin coding ends and 2 blunt, 5'-phosphorylated ends. The chromatin structure plays an essential role in the V(D)J recombination reactions and the presence of histone H3 trimethylated at 'Lys-4' (H3K4me3) stimulates both the nicking and haipinning steps. The RAG complex also plays a role in pre-B cell allelic exclusion, a process leading to expression of a single immunoglobulin heavy chain allele to enforce clonality and monospecific recognition by the B-cell antigen receptor (BCR) expressed on individual B-lymphocytes. The introduction of DNA breaks by the RAG complex on one immunoglobulin allele induces ATM-dependent repositioning of the other allele to pericentromeric heterochromatin, preventing accessibility to the RAG complex and recombination of the second allele. In addition to its endonuclease activity, RAG1 also acts as an E3 ubiquitin-protein ligase that mediates monoubiquitination of histone H3. Histone H3 monoubiquitination is required for the joining step of V(D)J recombination. Mediates polyubiquitination of KPNA1. In Mus musculus (Mouse), this protein is V(D)J recombination-activating protein 1 (Rag1).